An 889-amino-acid chain; its full sequence is Low-affinity potassium transport protein (889 aa).

At 1-51 (MPTAKRTSSRASLALPFQLRLVHKKSWGHRLRDFISGFLKSCRPIAKYVFP) the chain is on the cytoplasmic side. The chain crosses the membrane as a helical span at residues 52-73 (NFIVVHYIYLITLSIIGSILLY). Residues 74–80 (PCKNTAF) are Extracellular-facing. The helical transmembrane segment at 81 to 101 (IDVLFLAAGASTQGGLATKST) threads the bilayer. Residues 102–109 (NDFNLYQQ) are Cytoplasmic-facing. The chain crosses the membrane as a helical span at residues 110 to 130 (IVVYVITLLSTPILIHGFLAF). Residues 131–464 (VRLYWFERYF…EYRALRLLCC (334 aa)) lie on the Extracellular side of the membrane. The segment at 189–244 (REDPRQSASDVPMDSPDTSALSSISPLNVSSSKEESSDTQSSPPNFSSKRQPSDVD) is disordered. Low complexity predominate over residues 207–219 (SALSSISPLNVSS). Residues N216, N233, and N265 are each glycosylated (N-linked (GlcNAc...) asparagine). Residues 465-487 (ILMVYYIGFNILAFVTIVPWACT) form a helical membrane-spanning segment. The Cytoplasmic portion of the chain corresponds to 488-499 (RHHYSEIIRRNG). Residues 500–521 (VSPTWWGFFTAMSAFSNLGLSL) traverse the membrane as a helical segment. Residues 522-524 (TAD) lie on the Extracellular side of the membrane. The helical transmembrane segment at 525–545 (SMVSFDTAPYPLIFMMFFIII) threads the bilayer. At 546 to 548 (GNT) the chain is on the cytoplasmic side. The helical transmembrane segment at 549–569 (GFPIMLRFIIWIMFKTSRDLS) threads the bilayer. The Extracellular segment spans residues 570–584 (QFKESLGFLLDHPRR). The chain crosses the membrane as a helical span at residues 585-605 (CFTLLFPSGPTWWLFTTLVVL). At 606–609 (NATD) the chain is on the cytoplasmic side. The chain crosses the membrane as a helical span at residues 610-630 (WILFIILDFNSAVVRQVAKGY). Over 631–657 (RALMGLFQSVCTRTAGFNVVDLSKLHP) the chain is Extracellular. The helical transmembrane segment at 658–678 (SIQVSYMLMMYVSVLPLAISI) threads the bilayer. Residues 679-743 (RRTNVYEEQS…KSFVGAHLRR (65 aa)) are Cytoplasmic-facing. The segment at 705 to 733 (DDIKETDHDGESEERDTVSTKSKPKKQSP) is disordered. Residues 744–764 (QLSFDLWYLFLGLFIICICEG) form a helical membrane-spanning segment. The Extracellular portion of the chain corresponds to 765–776 (RKIEDVNKPDFN). Residues 777-797 (VFAILFEVVSAYGTVGLSLGY) form a helical membrane-spanning segment. The Cytoplasmic portion of the chain corresponds to 798-889 (PNTNTSLSAQ…KIATKFWGKH (92 aa)).

Belongs to the TrkH potassium transport family.

The protein resides in the membrane. Its function is as follows. This protein is required for low-affinity potassium transport. This Saccharomyces cerevisiae (strain ATCC 204508 / S288c) (Baker's yeast) protein is Low-affinity potassium transport protein (TRK2).